Reading from the N-terminus, the 102-residue chain is Redox- and pH-responsive transcriptional regulator WhiB3 (102 aa).

Positions 22–86 constitute a 4Fe-4S Wbl-type domain; it reads LCRGMDSSMF…GGLSESERDL (65 aa). Residues cysteine 23, cysteine 53, cysteine 56, and cysteine 62 each coordinate [4Fe-4S] cluster.

It belongs to the WhiB family. In terms of assembly, homodimer. Interacts with the C-terminal 54 residues of sigma factor SigA (RpoV). [4Fe-4S] cluster serves as cofactor. In terms of processing, the 4Fe-4S cluster interacts with NO, forming a protein-bound dinitrosyliron dithiol complex. Post-translationally, the 4Fe-4S cluster interacts with O(2), leading to its degradation. Cluster loss takes about 2 hours. Once in the apo-form the cysteines oxidize to form 2 intramolecular disulfide bonds.

It is found in the cytoplasm. Its function is as follows. A redox-sensitive transcriptional regulator. Maintains intracellular redox homeostasis by regulating catabolic metabolism and polyketide biosynthesis. Regulates expression of the redox buffer ergothioneine (ERG) in a carbon-source-dependent manner; loss of ERG or mycothiol (MSH, the other major redox buffer in this bacteria) leads to respiratory alterations and bioenergetic deficiencies that negatively impact virulence. In response to low external pH (like that found in host macrophage phagosomes) alters endogenous gene expression leading to acid resistance; MSH and WhiB3 are probably part of a regulatory circuit that mediates gene expression upon acid stress. Regulates pathogenic lipid synthesis, coordinating proprionate flux (and other host-derived fatty acid oxidation intermediates) into methyl-branched fatty acids (polyacyltrehalose, phthiocerol dimycocerosates, sulfolipids) and the storage lipid triacylglycerol, functioning as reductive sink. During intracellular growth M.tuberculosis uses host fatty acids as an energy source, generating large quantities of proprionate and NADH/NADPH, which are toxic and highly reducing respectively. WhiB3 is thought to help dissipate proprionate and NADH/NADPH by switching to the in vivo carbon source and via lipid anabolism. Responds to NO and O(2). Regulates expression of genes encoding modular polyketide synthases such as pks2, pks3 and fbpA. The oxidized apo-form of WhiB3 binds DNA (with 2 intramolecular disulfide bonds); holo-WhiB3 (with the 4Fe-4S cluster) binds DNA considerably less well. Discriminates poorly between specific and non-specific DNA-binding. Plays a role in virulence and nutritional stress. In its apo-form can act as a protein disulfide reductase. Functionally, may respond to mycothiol (MSH) redox potential (E-MSH) which decreases at pH 4.5 for up to 72 hours, indicative of cellular reductive stress; deletion of whiB3 leads to a lesser E-MSH at 72 hours, indicative of cellular oxidative stress. Probably via its effects on production of polyketide lipids, regulates host gene expression, leading to blockage of phagosome maturation. Equilibration of extra- and intracytoplasmic pH kills bacteria. The chain is Redox- and pH-responsive transcriptional regulator WhiB3 (whiB3) from Mycobacterium tuberculosis (strain ATCC 25618 / H37Rv).